A 207-amino-acid chain; its full sequence is Metalloproteinase inhibitor 1 (207 aa).

An N-terminal signal peptide occupies residues 1 to 23; it reads MAPLAALASSMLLLLWLVAPSRA. C24 lines the Zn(2+) pocket. The segment at 24–27 is involved in metalloproteinase-binding; sequence CTCV. Intrachain disulfides connect C24–C93, C26–C122, C36–C147, C150–C197, C155–C160, and C168–C189. Positions 24 to 147 constitute an NTR domain; it reads CTCVPPHPQT…GFTKTYAAGC (124 aa). N53 carries N-linked (GlcNAc...) asparagine glycosylation. Residues 90 to 91 are involved in metalloproteinase-binding; that stretch reads ES. N-linked (GlcNAc...) asparagine glycosylation is present at N101. S178 is modified (phosphoserine).

Belongs to the protease inhibitor I35 (TIMP) family. In terms of assembly, interacts with MMP1, MMP3, MMP10 and MMP13, but has only very low affinity for MMP14. Interacts with CD63; identified in a complex with CD63 and ITGB1. Post-translationally, the activity of TIMP1 is dependent on the presence of disulfide bonds. N-glycosylated.

The protein localises to the secreted. Its function is as follows. Metalloproteinase inhibitor that functions by forming one to one complexes with target metalloproteinases, such as collagenases, and irreversibly inactivates them by binding to their catalytic zinc cofactor. Acts on MMP1, MMP2, MMP3, MMP7, MMP8, MMP9, MMP10, MMP11, MMP12, MMP13 and MMP16. Does not act on MMP14. Also functions as a growth factor that regulates cell differentiation, migration and cell death and activates cellular signaling cascades via CD63 and ITGB1. Plays a role in integrin signaling. This is Metalloproteinase inhibitor 1 (TIMP1) from Oryctolagus cuniculus (Rabbit).